Reading from the N-terminus, the 183-residue chain is Ankyrin repeat domain-containing protein 39 (183 aa).

ANK repeat units follow at residues 30–59 (DFERGIWSAALNGDLGRVKYLIQKAVDPSQ), 63–92 (AGYTALHYASRNGHYAVCQFLLESGAKCDA), 96–125 (GGATALHRASYCGHTDIARLLLSHGSNPRL), and 129–158 (DGMTSLHKAAEKGHVDICSLLLQHSPALKA). Serine 153 is modified (phosphoserine).

Belongs to the ANKRD39 family.

The sequence is that of Ankyrin repeat domain-containing protein 39 (ANKRD39) from Bos taurus (Bovine).